The primary structure comprises 155 residues: Protein-export protein SecB (155 aa).

It belongs to the SecB family. As to quaternary structure, homotetramer, a dimer of dimers. One homotetramer interacts with 1 SecA dimer.

The protein localises to the cytoplasm. One of the proteins required for the normal export of preproteins out of the cell cytoplasm. It is a molecular chaperone that binds to a subset of precursor proteins, maintaining them in a translocation-competent state. It also specifically binds to its receptor SecA. This is Protein-export protein SecB from Psychromonas ingrahamii (strain DSM 17664 / CCUG 51855 / 37).